The following is a 1915-amino-acid chain: Protein TIC 214 (1915 aa).

Helical transmembrane passes span 18–38, 64–84, 90–110, 126–146, 174–194, and 230–250; these read IINS…FSIG, FITG…HLAL, ITVL…HKYF, LNIQ…HFIL, VGWL…LIWI, and IFSI…PSTL. 2 disordered regions span residues 260-319 and 1566-1631; these read KMKQ…EIRV and NKNI…GSVL. Residues 267–277 show a composition bias toward acidic residues; it reads SEEETDVEIET. Residues 279–288 show a composition bias toward basic and acidic residues; sequence SETKETKEEQ. Acidic residues predominate over residues 304 to 315; that stretch reads EKEDPDKIDETE. Residues 1587-1601 show a composition bias toward basic and acidic residues; the sequence is KSLELENRNQEEKES. Over residues 1602–1631 the composition is skewed to polar residues; the sequence is SSQGDLGSNAQNQGNLGPNAQNQGNLGSVL.

It belongs to the TIC214 family. Part of the Tic complex.

The protein resides in the plastid. It localises to the chloroplast inner membrane. Its function is as follows. Involved in protein precursor import into chloroplasts. May be part of an intermediate translocation complex acting as a protein-conducting channel at the inner envelope. The protein is Protein TIC 214 of Platanus occidentalis (Sycamore).